Consider the following 315-residue polypeptide: tRNA dimethylallyltransferase (315 aa).

Residue 13–20 participates in ATP binding; sequence GPTASGKT. Residue 15–20 participates in substrate binding; sequence TASGKT. Interaction with substrate tRNA regions lie at residues 38-41, 162-166, 243-248, and 276-283; these read DSAL, QRLSR, RCVGYR, and KRQITWLR.

This sequence belongs to the IPP transferase family. In terms of assembly, monomer. Mg(2+) serves as cofactor.

It carries out the reaction adenosine(37) in tRNA + dimethylallyl diphosphate = N(6)-dimethylallyladenosine(37) in tRNA + diphosphate. In terms of biological role, catalyzes the transfer of a dimethylallyl group onto the adenine at position 37 in tRNAs that read codons beginning with uridine, leading to the formation of N6-(dimethylallyl)adenosine (i(6)A). The polypeptide is tRNA dimethylallyltransferase (Vibrio cholerae serotype O1 (strain ATCC 39541 / Classical Ogawa 395 / O395)).